A 1252-amino-acid polypeptide reads, in one-letter code: Elongator complex protein 1 (1252 aa).

The interval 814–1252 (VDVNDLYNVA…MMDWQHEILQ (439 aa)) is mediates dimerization. Position 1094 is a phosphoserine (serine 1094). Positions 1097–1116 (SSQYSGTSRRTGKTFRSSKN) are disordered. Positions 1106–1116 (RTGKTFRSSKN) are enriched in basic residues. The required for binding to tRNA stretch occupies residues 1111 to 1129 (FRSSKNRRKHERKLFSLKP).

Belongs to the ELP1/IKA1 family. Homodimer. Component of the elongator complex composed of Elp1, Elp2, Elp3, Elp4, Elp5 and Elp6. The elongator complex associates with and stabilizes microtubules; efficient interaction requires the full complex.

It is found in the cytoplasm. The protein resides in the nucleus. Its subcellular location is the cytoskeleton. It localises to the spindle. It participates in tRNA modification; 5-methoxycarbonylmethyl-2-thiouridine-tRNA biosynthesis. Component of the elongator complex, which is required for multiple tRNA modifications, including mcm5U (5-methoxycarbonylmethyl uridine), mcm5s2U (5-methoxycarbonylmethyl-2-thiouridine), and ncm5U (5-carbamoylmethyl uridine). The elongator complex catalyzes formation of carboxymethyluridine in the wobble base at position 34 in tRNAs. ELP1 binds to tRNA, mediating interaction of the elongator complex with tRNA. Binding by the elongator complex stabilizes microtubules and promotes their growth. This induces central spindle asymmetry, promoting polarized signaling endosome trafficking during asymmetric cell division and cell fate assignation of sensory organ precursor cells. Involved in protein synthesis-dependent long-term memory formation, probably as part of the elongator complex. The protein is Elongator complex protein 1 of Drosophila melanogaster (Fruit fly).